The sequence spans 225 residues: 7-cyano-7-deazaguanine synthase (225 aa).

10–20 (FSGGQDSTTLA) contributes to the ATP binding site. Zn(2+) contacts are provided by Cys-190, Cys-205, Cys-208, and Cys-211.

The protein belongs to the QueC family. Zn(2+) is required as a cofactor.

It catalyses the reaction 7-carboxy-7-deazaguanine + NH4(+) + ATP = 7-cyano-7-deazaguanine + ADP + phosphate + H2O + H(+). It participates in purine metabolism; 7-cyano-7-deazaguanine biosynthesis. Catalyzes the ATP-dependent conversion of 7-carboxy-7-deazaguanine (CDG) to 7-cyano-7-deazaguanine (preQ(0)). In Helicobacter pylori (strain J99 / ATCC 700824) (Campylobacter pylori J99), this protein is 7-cyano-7-deazaguanine synthase.